The following is a 542-amino-acid chain: MAVSAPLRSLEEEVTCSICLDYLRDPVTIDCGHVFCRSCTSDIRPISGNRPVCPLCKKPFKKENIRPVWQLASLVENIERLKVDNGKQPGELAREPQDMKLCERHQEKLHYYCEDDGKLLCVMCRESREHRPHTAVLVEKAALPHREKILNHLNTLRRDRDKIQGFQAKGEADILAALTKLQEQRQYIVAEFKQGHQFLKKREQHLLDQLATLEQLLTEGREKFKTRGVSELDRLTLVISELEGKARQPAAELMQLSDRLSCLSLRYPRKKFWIGKAIPHMVKRKAGEFSDKLLSLQRGLRQFQGKLLRDLEYKTVSVTLDPQSASGYLQLSEDWKCITYTGQYQSDCLLPQQFDCEPGVLGSKGFTWGKVYWEVELEREGWSEDEEEGEEEEEGEEEEEDEEPGYGDRYEDWETDEEDESLGEEEEEEEEEEEEVQESCMVGVAKDSVKRKGNLSLRPEDGVWALRLSPSGIWANTSPEAQLFPVLRPRRVGIALDYEGGTVTFTNAESQELIYTFTTTFTRRLVPFLWLKWPEARLLLRP.

Residues 16–57 form an RING-type zinc finger; the sequence is CSICLDYLRDPVTIDCGHVFCRSCTSDIRPISGNRPVCPLCK. The segment at 97-138 adopts a B box-type zinc-finger fold; the sequence is QDMKLCERHQEKLHYYCEDDGKLLCVMCRESREHRPHTAVLV. The Zn(2+) site is built by C102, H105, C124, and H130. A coiled-coil region spans residues 197–243; the sequence is QFLKKREQHLLDQLATLEQLLTEGREKFKTRGVSELDRLTLVISELE. One can recognise a B30.2/SPRY domain in the interval 298–542; it reads RGLRQFQGKL…WPEARLLLRP (245 aa). The tract at residues 379–440 is disordered; it reads REGWSEDEEE…EEEEEVQESC (62 aa). 2 stretches are compositionally biased toward acidic residues: residues 383 to 405 and 413 to 437; these read SEDEEEGEEEEEGEEEEEDEEPG and WETDEEDESLGEEEEEEEEEEEEVQ. Positions 411–440 form a coiled coil; it reads EDWETDEEDESLGEEEEEEEEEEEEVQESC.

Belongs to the TRIM/RBCC family. Interacts with TBK1; this interaction bridges together TBK1 and NEMO in order to activate TBK1. Interacts with INCA1. Autoubiquitinates upon viral infection. In turn, autoubiquitinated TRIM26 recruits NEMO and bridges TBK1-NEMO interaction.

It localises to the cytoplasm. The protein localises to the nucleus. It catalyses the reaction S-ubiquitinyl-[E2 ubiquitin-conjugating enzyme]-L-cysteine + [acceptor protein]-L-lysine = [E2 ubiquitin-conjugating enzyme]-L-cysteine + N(6)-ubiquitinyl-[acceptor protein]-L-lysine.. Functionally, E3 ubiquitin-protein ligase which regulates the IFN-beta production and antiviral response downstream of various DNA-encoded pattern-recognition receptors (PRRs). Also plays a central role in determining the response to different forms of oxidative stress by controlling levels of DNA glycosylases NEIL1, NEIL3 and NTH1 that are involved in repair of damaged DNA. Promotes nuclear IRF3 ubiquitination and proteasomal degradation. Bridges together TBK1 and NEMO during the innate response to viral infection leading to the activation of TBK1. Positively regulates LPS-mediated inflammatory innate immune response by catalyzing the 'Lys-11'-linked polyubiquitination of TAB1 to enhance its activation and subsequent NF-kappa-B and MAPK signaling. In a manner independent of its catalytic activity, inhibits WWP2, a SOX2-directed E3 ubiquitin ligase, and thus protects SOX2 from polyubiquitination and proteasomal degradation. Ubiquitinates the histone acetyltransferase protein complex component PHF20 and thereby triggers its degradation in the nucleus after its recruitment by the histone demethylase KDM6B, serving as a scaffold protein. Upon induction by TGF-beta, ubiquitinates the TFIID component TAF7 for proteasomal degradation. Induces ferroptosis by ubiquitinating SLC7A11, a critical protein for lipid reactive oxygen species (ROS) scavenging. In Rattus norvegicus (Rat), this protein is Tripartite motif-containing protein 26 (Trim26).